The following is a 381-amino-acid chain: Chymosin (381 aa).

The N-terminal stretch at 1-16 is a signal peptide; that stretch reads MRCLVVLLAVFALSQG. The propeptide at 17–58 is activation peptide; sequence AEITRIPLYKGKSLRKALKEHGLLEDFLQKQQYGISSKYSGF. The Peptidase A1 domain maps to 74-378; it reads YFGKIYLGTP…DRANNLVGLA (305 aa). D92 is an active-site residue. Cystine bridges form between C105–C110 and C265–C269. D274 is an active-site residue. A disulfide bridge connects residues C308 and C341.

This sequence belongs to the peptidase A1 family. Monomer.

The catalysed reaction is Broad specificity similar to that of pepsin A. Clots milk by cleavage of a single 104-Ser-Phe-|-Met-Ala-107 bond in kappa-chain of casein.. In terms of biological role, chymosin is synthesized in the mucosa of the abomasum (fourth stomach) of young (unweaned) ruminants. The enzyme hydrolyzes casein to paracasein. In Bos taurus (Bovine), this protein is Chymosin (CYM).